Consider the following 729-residue polypeptide: Polyribonucleotide nucleotidyltransferase (729 aa).

Mg(2+)-binding residues include Asp485 and Asp491. One can recognise a KH domain in the interval 552–611 (PRITTMKVAEDKIRTIIGKGGATIKGLIESTGVSIDIDDSGVIQLFSPDKMALEEAQKQI). The S1 motif domain maps to 621 to 689 (GQTYQGKVSK…KQGRVKLEWK (69 aa)).

Belongs to the polyribonucleotide nucleotidyltransferase family. As to quaternary structure, component of the RNA degradosome, which is a multiprotein complex involved in RNA processing and mRNA degradation. It depends on Mg(2+) as a cofactor.

Its subcellular location is the cytoplasm. It carries out the reaction RNA(n+1) + phosphate = RNA(n) + a ribonucleoside 5'-diphosphate. Its function is as follows. Involved in mRNA degradation. Catalyzes the phosphorolysis of single-stranded polyribonucleotides processively in the 3'- to 5'-direction. This is Polyribonucleotide nucleotidyltransferase from Legionella pneumophila (strain Corby).